Here is a 122-residue protein sequence, read N- to C-terminus: Large ribosomal subunit protein uL14c (122 aa).

It belongs to the universal ribosomal protein uL14 family. In terms of assembly, part of the 50S ribosomal subunit.

The protein localises to the plastid. It is found in the chloroplast. Functionally, binds to 23S rRNA. The protein is Large ribosomal subunit protein uL14c (rpl14) of Bigelowiella natans (Pedinomonas minutissima).